A 223-amino-acid polypeptide reads, in one-letter code: Deoxyribose-phosphate aldolase (223 aa).

Residue Asp89 is the Proton donor/acceptor of the active site. Catalysis depends on Lys152, which acts as the Schiff-base intermediate with acetaldehyde. The active-site Proton donor/acceptor is the Lys181.

Belongs to the DeoC/FbaB aldolase family. DeoC type 1 subfamily.

It localises to the cytoplasm. The catalysed reaction is 2-deoxy-D-ribose 5-phosphate = D-glyceraldehyde 3-phosphate + acetaldehyde. It functions in the pathway carbohydrate degradation; 2-deoxy-D-ribose 1-phosphate degradation; D-glyceraldehyde 3-phosphate and acetaldehyde from 2-deoxy-alpha-D-ribose 1-phosphate: step 2/2. Functionally, catalyzes a reversible aldol reaction between acetaldehyde and D-glyceraldehyde 3-phosphate to generate 2-deoxy-D-ribose 5-phosphate. The protein is Deoxyribose-phosphate aldolase of Bacillus cereus (strain Q1).